The primary structure comprises 272 residues: Undecaprenyl-diphosphatase (272 aa).

8 helical membrane-spanning segments follow: residues 5–25 (YSLFVAFVLGVVEGLTEFLPV), 45–65 (AKTFEVIIQLGSILAVVVVFW), 88–108 (HLTLGHILLAMIPAVGLGLAF), 115–135 (LFNPQSVMYALVAGGLLLLAA), 152–171 (TYRQAFAIGCFQCLALWPGF), 189–209 (YAASEFSFILAVPMMLGASGL), 221–241 (GDLPMFAVGFITAFVVALIAI), and 251–271 (ISFVPFAIYRFIVAAAVYWVF).

This sequence belongs to the UppP family.

The protein localises to the cell inner membrane. The catalysed reaction is di-trans,octa-cis-undecaprenyl diphosphate + H2O = di-trans,octa-cis-undecaprenyl phosphate + phosphate + H(+). Catalyzes the dephosphorylation of undecaprenyl diphosphate (UPP). Confers resistance to bacitracin. In Yersinia enterocolitica serotype O:8 / biotype 1B (strain NCTC 13174 / 8081), this protein is Undecaprenyl-diphosphatase.